The following is a 434-amino-acid chain: Histidine--tRNA ligase (434 aa).

The segment at 412-434 (DQTTVPVEAFPGDHDAPTYEDVV) is disordered.

The protein belongs to the class-II aminoacyl-tRNA synthetase family.

It is found in the cytoplasm. The enzyme catalyses tRNA(His) + L-histidine + ATP = L-histidyl-tRNA(His) + AMP + diphosphate + H(+). This is Histidine--tRNA ligase from Haloquadratum walsbyi (strain DSM 16790 / HBSQ001).